The chain runs to 979 residues: Protocadherin alpha-9 (979 aa).

The N-terminal stretch at 1–59 (MRLGNRPEDIRTCVHLRWHIHGLLRQENASVVISKCLRHGAWRLLLWLLLLATWDVGSG) is a signal peptide. The Extracellular segment spans residues 60–726 (QLHYSVPEEA…RREASLMDVN (667 aa)). Cadherin domains lie at 64–163 (SVPE…PPIF), 164–272 (SVAE…APVF), 273–380 (DRSV…APEI), 381–485 (VLTS…APAF), 486–595 (AHPE…PPTL), and 611–707 (VSRS…VPKA). Asn287 and Asn295 each carry an N-linked (GlcNAc...) asparagine glycan. N-linked (GlcNAc...) asparagine glycosylation is present at Asn578. Residues 727 to 747 (VYLIIAICAVSSLLVLTLLLY) form a helical membrane-spanning segment. The Cytoplasmic portion of the chain corresponds to 748–979 (TALRCSAVPM…GNSTTDNSDQ (232 aa)). PXXP repeat units lie at residues 763–766 (LGKP), 828–831 (PRQP), 861–864 (PGGP), 902–905 (PGNP), and 920–923 (PGSP). Residues 763–923 (LGKPTLVCSS…PDKFIIPGSP (161 aa)) form a 5 X 4 AA repeats of P-X-X-P region. Positions 859-979 (AGPGGPDQQW…GNSTTDNSDQ (121 aa)) are disordered. The span at 938-952 (DKSDFITFGKKEETK) shows a compositional bias: basic and acidic residues.

The protein resides in the cell membrane. Functionally, potential calcium-dependent cell-adhesion protein. May be involved in the establishment and maintenance of specific neuronal connections in the brain. This is Protocadherin alpha-9 from Mus musculus (Mouse).